Consider the following 120-residue polypeptide: Large ribosomal subunit protein uL18 (120 aa).

The protein belongs to the universal ribosomal protein uL18 family. In terms of assembly, part of the 50S ribosomal subunit; part of the 5S rRNA/L5/L18/L25 subcomplex. Contacts the 5S and 23S rRNAs.

Functionally, this is one of the proteins that bind and probably mediate the attachment of the 5S RNA into the large ribosomal subunit, where it forms part of the central protuberance. The polypeptide is Large ribosomal subunit protein uL18 (Geobacillus sp. (strain WCH70)).